Here is a 181-residue protein sequence, read N- to C-terminus: Trafficking protein particle complex subunit 3-like protein (181 aa).

Residue Cys-68 is the site of S-palmitoyl cysteine attachment.

This sequence belongs to the TRAPP small subunits family. BET3 subfamily. Homodimer. Component of the multisubunit TRAPP (transport protein particle) complex, which includes at least TRAPPC2, TRAPPC2L, TRAPPC3, TRAPPC3L, TRAPPC4, TRAPPC5, TRAPPC8, TRAPPC9, TRAPPC10, TRAPPC11 and TRAPPC12.

It is found in the golgi apparatus. Its subcellular location is the cis-Golgi network. The protein resides in the endoplasmic reticulum. Functionally, may play a role in vesicular transport from endoplasmic reticulum to Golgi. This chain is Trafficking protein particle complex subunit 3-like protein (Trappc3l), found in Mus musculus (Mouse).